Here is a 3461-residue protein sequence, read N- to C-terminus: Reelin (3461 aa).

The N-terminal stretch at 1-26 is a signal peptide; the sequence is MERGCWAPRALVLAVLLLLATLRARA. One can recognise a Reelin domain in the interval 27–191; that stretch reads ATGYYPRFSP…GAPTEATAYS (165 aa). A disulfide bridge connects residues Cys41 and Cys127. Residue Asn141 is glycosylated (N-linked (GlcNAc...) asparagine). Cys155 and Cys179 are disulfide-bonded. 3 N-linked (GlcNAc...) asparagine glycosylation sites follow: Asn258, Asn290, and Asn306. Cys540 and Cys581 are oxidised to a cystine. One copy of the BNR 1 repeat lies at 593–604; sequence EFSTNHGRSWSL. Cysteines 609 and 614 form a disulfide. A glycan (N-linked (GlcNAc...) asparagine) is linked at Asn629. The EGF-like 1 domain maps to 671–702; that stretch reads IGPSCLKFCSGRGQCTRHGCKCDPGFSGPACE. Disulfide bonds link Cys675/Cys685 and Cys692/Cys701. Residues 799-810 form a BNR 2 repeat; it reads HYSYDNGITWKL. A disulfide bridge links Cys895 with Cys937. Residues 952-963 form a BNR 3 repeat; it reads EYSANHGLTWHL. 3 cysteine pairs are disulfide-bonded: Cys968–Cys975, Cys1034–Cys1044, and Cys1051–Cys1060. The 32-residue stretch at 1030-1061 folds into the EGF-like 2 domain; sequence IGQQCPNMCSGHGSCDHGVCRCDQGYQGTECH. A BNR 4 repeat occupies 1157–1168; sequence QYSNNGGIQWHL. Asn1267 is a glycosylation site (N-linked (GlcNAc...) asparagine). Residues 1323–1334 form a BNR 5 repeat; the sequence is QYSHDAGMSWFL. Disulfide bonds link Cys1339–Cys1348, Cys1413–Cys1423, Cys1417–Cys1428, and Cys1430–Cys1441. The EGF-like 3 domain maps to 1409-1442; sequence ISEPCPSYCSGHGDCISGVCFCDLGYTAAQGTCV. A glycan (N-linked (GlcNAc...) asparagine) is linked at Asn1447. A disulfide bridge links Cys1475 with Cys1522. The stretch at 1535 to 1546 is one BNR 6 repeat; the sequence is QYSNDNGILWHL. The N-linked (GlcNAc...) asparagine glycan is linked to Asn1600. Cysteines 1633 and 1673 form a disulfide. The BNR 7 repeat unit spans residues 1686 to 1697; it reads QYSLNNGKDWQL. The cysteines at positions 1702 and 1709 are disulfide-linked. N-linked (GlcNAc...) asparagine glycosylation is present at Asn1750. An EGF-like 4 domain is found at 1765-1796; sequence LASGCPWMCSGRGICDSGRCVCDRGFGGPFCV. A BNR 8 repeat occupies 1884 to 1895; that stretch reads QFSVSGGVTWHL. The N-linked (GlcNAc...) asparagine glycan is linked to Asn1921. The cysteines at positions 1983 and 2030 are disulfide-linked. The stretch at 2043-2054 is one BNR 9 repeat; that stretch reads EFSRDFGATWHL. Residues Cys2059 and Cys2070 are joined by a disulfide bond. Zn(2+) contacts are provided by His2061 and His2074. The region spanning 2129–2161 is the EGF-like 5 domain; it reads IGPQCEEMCYGHGSCINGTKCICDPGYSGPTCK. Disulfide bonds link Cys2133-Cys2143, Cys2137-Cys2149, and Cys2151-Cys2160. Asn2145 carries an N-linked (GlcNAc...) asparagine glycan. Glu2179 provides a ligand contact to Zn(2+). An intrachain disulfide couples Cys2195 to Cys2235. A BNR 10 repeat occupies 2250-2261; sequence QYSLNGGLSWSL. Glu2264 serves as a coordination point for Zn(2+). Residues Asn2269 and Asn2317 are each glycosylated (N-linked (GlcNAc...) asparagine). 6 disulfides stabilise this stretch: Cys2348–Cys2387, Cys2393–Cys2559, Cys2482–Cys2492, Cys2486–Cys2497, Cys2499–Cys2508, and Cys2544–Cys2584. Residues Glu2397, Glu2399, and His2460 each coordinate Zn(2+). The BNR 11 repeat unit spans residues 2399–2410; it reads EYSVDLGLSWHP. Positions 2478-2509 constitute an EGF-like 6 domain; that stretch reads IGDGCLDMCSGHGRCVQGSCVCDEQWGGLYCD. Residue Asn2569 is glycosylated (N-linked (GlcNAc...) asparagine). BNR repeat units follow at residues 2598 to 2609 and 2778 to 2789; these read EYSVNGGITWNL and QFSTDFGVSWSY. A disulfide bridge connects residues Cys2794 and Cys2801. One can recognise an EGF-like 7 domain in the interval 2853–2884; that stretch reads LGPGCLDNCGGHGDCLKEQCICDPGYSGPNCY. Cys2919 and Cys2966 are disulfide-bonded. A glycan (N-linked (GlcNAc...) asparagine) is linked at Asn2962. A BNR 14 repeat occupies 2979–2990; it reads DFSTDGGITWTL. Asn3016 and Asn3073 each carry an N-linked (GlcNAc...) asparagine glycan. Residues 3143–3155 form a BNR 15 repeat; the sequence is EYTKDARSDSWQL. A disulfide bond links Cys3160 and Cys3170. Asn3185 carries N-linked (GlcNAc...) asparagine glycosylation. The EGF-like 8 domain occupies 3228-3260; it reads IGEACPKLCSGHGYCTTGAVCICDESFQGDDCS. 4 disulfides stabilise this stretch: Cys3232–Cys3242, Cys3236–Cys3248, Cys3250–Cys3259, and Cys3296–Cys3346. The stretch at 3363-3374 is one BNR 16 repeat; sequence QYSVNNGITWHV. 2 N-linked (GlcNAc...) asparagine glycosylation sites follow: Asn3412 and Asn3439.

The protein belongs to the reelin family. Oligomer of disulfide-linked homodimers. Post-translationally, N-glycosylated and to a lesser extent also O-glycosylated. As to expression, the major isoform 1 is neuron-specific. It is abundantly produced during brain ontogenesis by the Cajal-Retzius cells and other pioneer neurons located in the telencephalic marginal zone and by granule cells of the external granular layer of the cerebellum. Expression is located in deeper layers in the developing hippocampus and olfactory bulb, low levels of expression are also detected in the immature striatum. At early developmental stages, expressed also in hypothalamic differentiation fields, tectum and spinal cord. A moderate to low level of expression occurs in the septal area, striatal fields, habenular nuclei, some thalamic nuclei, particularly the lateral geniculate, the retina and some nuclei of the reticular formation in the central field of the medulla. Very low levels found in liver and kidney. No expression in radial glial cells, cortical plate, Purkinje cells and inferior olivary neurons. The minor isoform 2 is only expressed in non neuronal cells. The minor isoform 3 is found in the same cells as isoform 1, but is almost undetectable in retina and brain stem.

The protein localises to the secreted. It is found in the extracellular space. Its subcellular location is the extracellular matrix. In terms of biological role, extracellular matrix serine protease secreted by pioneer neurons that plays a role in layering of neurons in the cerebral cortex and cerebellum by coordinating cell positioning during neurodevelopment. Regulates microtubule function in neurons and neuronal migration. Binding to the extracellular domains of lipoprotein receptors VLDLR and LRP8/APOER2 induces tyrosine phosphorylation of DAB1 and modulation of TAU phosphorylation. Affects migration of sympathetic preganglionic neurons in the spinal cord, where it seems to act as a barrier to neuronal migration. Enzymatic activity is important for the modulation of cell adhesion. The sequence is that of Reelin (Reln) from Mus musculus (Mouse).